We begin with the raw amino-acid sequence, 157 residues long: CAPA peptides (157 aa).

The signal sequence occupies residues 1-21 (MQPTMRIIVSMALLAYAVASA). A propeptide spanning residues 22 to 28 (YHSNVKL) is cleaved from the precursor. Valine 42 carries the valine amide modification. Positions 45-66 (ASGNTWQLPLNDLYPEYEPAQV) are excised as a propeptide. Position 69 is a pyrrolidone carboxylic acid; partial (glutamine 69). Residue valine 76 is modified to Valine amide. Leucine amide is present on residues leucine 85 and leucine 117. The propeptide occupies 120-157 (AFKNDDDEITIQNESNDHSEPEQTELIHEDRRKRQTLN). Residues 131–157 (QNESNDHSEPEQTELIHEDRRKRQTLN) are disordered. Residues 134–151 (SNDHSEPEQTELIHEDRR) are compositionally biased toward basic and acidic residues.

It belongs to the pyrokinin family. As to expression, CAPA-periviscerokinin 1: Expressed in corpora cardiaca (CC), corpora allata (CA), antennal lobe (AL) and gnathal ganglion (GNG) (at protein level). Expression detected in most animals in CC and CA and in some animals in AL and GNG (at protein level). CAPA-periviscerokinin 2: Expressed in corpora cardiaca (CC), corpora allata (CA), antennal lobe (AL) and gnathal ganglion (GNG) (at protein level). For non-pyroglutamate form, expression in AL detected in all animals, in CC, CA and GNG in most animals (at protein level). For pyroglutamate form, expression in CC and CA detected in most animals, in AL and GNG in some animals (at protein level). CAPA-periviscerokinin 3: Expressed in corpora cardiaca (CC), corpora allata (CA), antennal lobe (AL) and gnathal ganglion (GNG). Expression detected in most animals in CC and CA and in some animals in AL and GNG (at protein level). CAPA-precursor-related peptide 3: Expressed in corpora cardiaca (CC), corpora allata (CA), antennal lobe (AL) and gnathal ganglion (GNG) (at protein level). Expression in CC and CA detected in some animals, expression in Al and GNG detected in few animals (at protein level). CAPA-trypto-pyrokinin: Expressed in corpora cardiaca (CC), corpora allata (CA), antennal lobe (AL) and gnathal ganglion (GNG) (at protein level). Expression in CC, CA and GNG detected in most animals, in AL in some animals (at protein level).

The protein localises to the secreted. Its function is as follows. Myoactive. The polypeptide is CAPA peptides (Agrotis ipsilon (Black cutworm moth)).